A 473-amino-acid polypeptide reads, in one-letter code: MKLSMPRFDQAPVLVVGDVMLDRYWHGGTSRISPEAPVPVVKVDQIEDRPGGAANVALNIAALGAPASLIGVTGQDEAADSLANSLQAAGVRSVFQRIAHQPTIVKLRVMSRHQQLLRIDFEEPFATDPLSLATEVDSLLEGVKVLVLSDYGKGALKNHQSLIQAARAKGIPVLADPKGKDFSIYRGASLITPNLSEFETIVGRCTDEADLVAKGLQLLQDLDLGALLVTRGEHGMTLLRVGQPALHLPARAREVFDVTGAGDTVISTLAAAIAAGEDLPHAVALANLAAGIVVGKLGTAAISAPELRRAIQREEGSERGVLGLEQLLLAIDDARAHKEKIVFTNGCFDILHAGHVTYLEQARAQGDRLIVAVNDDASVSRLKGPGRPINSVDRRMAVLAGLGAVDWVISFPEGTPENLLSQVKPDVLVKGGDYGIDQVVGADIVKAYGGTVKVLGLVENSSTTAIVEKIRKN.

The tract at residues 1–318 is ribokinase; sequence MKLSMPRFDQ…RAIQREEGSE (318 aa). 194 to 197 provides a ligand contact to ATP; that stretch reads NLSE. Asp-263 is an active-site residue. A cytidylyltransferase region spans residues 343–473; the sequence is FTNGCFDILH…TAIVEKIRKN (131 aa).

The protein in the N-terminal section; belongs to the carbohydrate kinase PfkB family. It in the C-terminal section; belongs to the cytidylyltransferase family. As to quaternary structure, homodimer.

It carries out the reaction D-glycero-beta-D-manno-heptose 7-phosphate + ATP = D-glycero-beta-D-manno-heptose 1,7-bisphosphate + ADP + H(+). The enzyme catalyses D-glycero-beta-D-manno-heptose 1-phosphate + ATP + H(+) = ADP-D-glycero-beta-D-manno-heptose + diphosphate. Its pathway is nucleotide-sugar biosynthesis; ADP-L-glycero-beta-D-manno-heptose biosynthesis; ADP-L-glycero-beta-D-manno-heptose from D-glycero-beta-D-manno-heptose 7-phosphate: step 1/4. It participates in nucleotide-sugar biosynthesis; ADP-L-glycero-beta-D-manno-heptose biosynthesis; ADP-L-glycero-beta-D-manno-heptose from D-glycero-beta-D-manno-heptose 7-phosphate: step 3/4. Its function is as follows. Catalyzes the phosphorylation of D-glycero-D-manno-heptose 7-phosphate at the C-1 position to selectively form D-glycero-beta-D-manno-heptose-1,7-bisphosphate. In terms of biological role, catalyzes the ADP transfer from ATP to D-glycero-beta-D-manno-heptose 1-phosphate, yielding ADP-D-glycero-beta-D-manno-heptose. The sequence is that of Bifunctional protein HldE from Pseudomonas putida (strain GB-1).